A 209-amino-acid polypeptide reads, in one-letter code: Redox-sensing transcriptional repressor Rex (209 aa).

Positions Leu-16–Phe-55 form a DNA-binding region, H-T-H motif. Position 90-95 (Gly-90–Gly-95) interacts with NAD(+).

The protein belongs to the transcriptional regulatory Rex family. Homodimer.

The protein resides in the cytoplasm. Functionally, modulates transcription in response to changes in cellular NADH/NAD(+) redox state. This is Redox-sensing transcriptional repressor Rex from Bacillus anthracis (strain A0248).